The chain runs to 178 residues: Large ribosomal subunit protein uL6 (178 aa).

Belongs to the universal ribosomal protein uL6 family. As to quaternary structure, part of the 50S ribosomal subunit.

This protein binds to the 23S rRNA, and is important in its secondary structure. It is located near the subunit interface in the base of the L7/L12 stalk, and near the tRNA binding site of the peptidyltransferase center. This Listeria innocua serovar 6a (strain ATCC BAA-680 / CLIP 11262) protein is Large ribosomal subunit protein uL6.